We begin with the raw amino-acid sequence, 67 residues long: Small ribosomal subunit protein bS21 (67 aa).

Belongs to the bacterial ribosomal protein bS21 family.

This chain is Small ribosomal subunit protein bS21 (rpsU), found in Aquifex aeolicus (strain VF5).